A 408-amino-acid chain; its full sequence is Na(+)-translocating NADH-quinone reductase subunit F (408 aa).

The helical transmembrane segment at 4–24 threads the bilayer; that stretch reads IYLGVGMFIAIVLALVLIIMF. The region spanning 33–127 is the 2Fe-2S ferredoxin-type domain; sequence GEVTISINGD…DMDIELPEEI (95 aa). [2Fe-2S] cluster-binding residues include cysteine 70, cysteine 76, cysteine 79, and cysteine 111. One can recognise an FAD-binding FR-type domain in the interval 130–270; it reads IKKWDCEVIS…SGPFGEFFAK (141 aa).

It belongs to the NqrF family. In terms of assembly, composed of six subunits; NqrA, NqrB, NqrC, NqrD, NqrE and NqrF. Requires [2Fe-2S] cluster as cofactor. It depends on FAD as a cofactor.

It is found in the cell inner membrane. The enzyme catalyses a ubiquinone + n Na(+)(in) + NADH + H(+) = a ubiquinol + n Na(+)(out) + NAD(+). Its function is as follows. NQR complex catalyzes the reduction of ubiquinone-1 to ubiquinol by two successive reactions, coupled with the transport of Na(+) ions from the cytoplasm to the periplasm. The first step is catalyzed by NqrF, which accepts electrons from NADH and reduces ubiquinone-1 to ubisemiquinone by a one-electron transfer pathway. The chain is Na(+)-translocating NADH-quinone reductase subunit F from Pseudoalteromonas atlantica (strain T6c / ATCC BAA-1087).